Consider the following 113-residue polypeptide: Small ribosomal subunit protein bS6 (113 aa).

Belongs to the bacterial ribosomal protein bS6 family.

Its function is as follows. Binds together with bS18 to 16S ribosomal RNA. The sequence is that of Small ribosomal subunit protein bS6 (rpsF) from Synechocystis sp. (strain ATCC 27184 / PCC 6803 / Kazusa).